Reading from the N-terminus, the 427-residue chain is Histidine--tRNA ligase (427 aa).

This sequence belongs to the class-II aminoacyl-tRNA synthetase family. Homodimer.

Its subcellular location is the cytoplasm. It catalyses the reaction tRNA(His) + L-histidine + ATP = L-histidyl-tRNA(His) + AMP + diphosphate + H(+). This Chloroherpeton thalassium (strain ATCC 35110 / GB-78) protein is Histidine--tRNA ligase.